A 61-amino-acid chain; its full sequence is MAKKSQIAKNKRPAKFSTQAYTRCERCGRPHSVYQKFHLCRICLRELAHKGQIPGMKKASW.

Residues C24, C27, C40, and C43 each coordinate Zn(2+).

It belongs to the universal ribosomal protein uS14 family. Zinc-binding uS14 subfamily. Part of the 30S ribosomal subunit. Contacts proteins S3 and S10. Zn(2+) is required as a cofactor.

Binds 16S rRNA, required for the assembly of 30S particles and may also be responsible for determining the conformation of the 16S rRNA at the A site. The polypeptide is Small ribosomal subunit protein uS14B (Levilactobacillus brevis (strain ATCC 367 / BCRC 12310 / CIP 105137 / JCM 1170 / LMG 11437 / NCIMB 947 / NCTC 947) (Lactobacillus brevis)).